Here is a 297-residue protein sequence, read N- to C-terminus: 4-hydroxy-tetrahydrodipicolinate synthase (297 aa).

Thr47 is a binding site for pyruvate. The active-site Proton donor/acceptor is the Tyr135. Lys163 (schiff-base intermediate with substrate) is an active-site residue. Pyruvate is bound at residue Ile205.

It belongs to the DapA family. As to quaternary structure, homotetramer; dimer of dimers.

The protein localises to the cytoplasm. It carries out the reaction L-aspartate 4-semialdehyde + pyruvate = (2S,4S)-4-hydroxy-2,3,4,5-tetrahydrodipicolinate + H2O + H(+). It participates in amino-acid biosynthesis; L-lysine biosynthesis via DAP pathway; (S)-tetrahydrodipicolinate from L-aspartate: step 3/4. Functionally, catalyzes the condensation of (S)-aspartate-beta-semialdehyde [(S)-ASA] and pyruvate to 4-hydroxy-tetrahydrodipicolinate (HTPA). The sequence is that of 4-hydroxy-tetrahydrodipicolinate synthase from Dehalococcoides mccartyi (strain ATCC BAA-2100 / JCM 16839 / KCTC 5957 / BAV1).